The sequence spans 359 residues: uncharacterized protein (359 aa).

The region spanning 163–275 (VVDTSCIIDG…SKVANLQKVQ (113 aa)) is the PINc domain. Positions 165 and 244 each coordinate Mg(2+). Residues 289–350 (IYLPGDSLEL…LQTSAGRMIF (62 aa)) form the TRAM domain.

This sequence belongs to the ycf81 family. It in the central section; belongs to the PINc/VapC protein family. It depends on Mg(2+) as a cofactor.

In terms of biological role, an RNase. This is an uncharacterized protein from Synechocystis sp. (strain ATCC 27184 / PCC 6803 / Kazusa).